The chain runs to 121 residues: Large ribosomal subunit protein uL22 (121 aa).

It belongs to the universal ribosomal protein uL22 family. As to quaternary structure, part of the 50S ribosomal subunit.

Functionally, this protein binds specifically to 23S rRNA; its binding is stimulated by other ribosomal proteins, e.g. L4, L17, and L20. It is important during the early stages of 50S assembly. It makes multiple contacts with different domains of the 23S rRNA in the assembled 50S subunit and ribosome. The globular domain of the protein is located near the polypeptide exit tunnel on the outside of the subunit, while an extended beta-hairpin is found that lines the wall of the exit tunnel in the center of the 70S ribosome. This chain is Large ribosomal subunit protein uL22, found in Beutenbergia cavernae (strain ATCC BAA-8 / DSM 12333 / CCUG 43141 / JCM 11478 / NBRC 16432 / NCIMB 13614 / HKI 0122).